Here is a 180-residue protein sequence, read N- to C-terminus: Segregation and condensation protein B (180 aa).

This sequence belongs to the ScpB family. In terms of assembly, homodimer. Homodimerization may be required to stabilize the binding of ScpA to the Smc head domains. Component of a cohesin-like complex composed of ScpA, ScpB and the Smc homodimer, in which ScpA and ScpB bind to the head domain of Smc. The presence of the three proteins is required for the association of the complex with DNA.

Its subcellular location is the cytoplasm. Its function is as follows. Participates in chromosomal partition during cell division. May act via the formation of a condensin-like complex containing Smc and ScpA that pull DNA away from mid-cell into both cell halves. This is Segregation and condensation protein B from Staphylococcus aureus (strain MSSA476).